The following is a 123-amino-acid chain: Large ribosomal subunit protein bL12 (123 aa).

It belongs to the bacterial ribosomal protein bL12 family. As to quaternary structure, homodimer. Part of the ribosomal stalk of the 50S ribosomal subunit. Forms a multimeric L10(L12)X complex, where L10 forms an elongated spine to which 2 to 4 L12 dimers bind in a sequential fashion. Binds GTP-bound translation factors.

Functionally, forms part of the ribosomal stalk which helps the ribosome interact with GTP-bound translation factors. Is thus essential for accurate translation. This chain is Large ribosomal subunit protein bL12, found in Maricaulis maris (strain MCS10) (Caulobacter maris).